Consider the following 370-residue polypeptide: Peptide chain release factor 1 (370 aa).

Residue Gln-239 is modified to N5-methylglutamine.

It belongs to the prokaryotic/mitochondrial release factor family. Post-translationally, methylated by PrmC. Methylation increases the termination efficiency of RF1.

It is found in the cytoplasm. In terms of biological role, peptide chain release factor 1 directs the termination of translation in response to the peptide chain termination codons UAG and UAA. This chain is Peptide chain release factor 1, found in Bacteroides thetaiotaomicron (strain ATCC 29148 / DSM 2079 / JCM 5827 / CCUG 10774 / NCTC 10582 / VPI-5482 / E50).